The sequence spans 391 residues: Tumor susceptibility gene 101 protein (391 aa).

The residue at position 2 (A2) is an N-acetylalanine. The region spanning 2 to 145 is the UEV domain; that stretch reads AVSESQLKKM…GEEPPVFSRP (144 aa). The interaction with CEP55 stretch occupies residues 159–163; the sequence is PPNTS. A disordered region spans residues 195–222; it reads GPYPATTSSQYPSQPPVTTAGPSRDGTI. The span at 200–215 shows a compositional bias: polar residues; the sequence is TTSSQYPSQPPVTTAG. Position 221 is a phosphothreonine (T221). Residues 238–317 adopt a coiled-coil conformation; it reads KLRWRMKEEM…NQSENNDIDE (80 aa). A PTAP motif motif is present at residues 321-324; it reads PTAP. The region spanning 323 to 391 is the SB domain; it reads APLYKQILNL…RKTAGLSDLY (69 aa).

Belongs to the ubiquitin-conjugating enzyme family. UEV subfamily. Component of the ESCRT-I complex (endosomal sorting complex required for transport I) which consists of TSG101, VPS28, a VPS37 protein (VPS37A to -D) and MVB12A or MVB12B in a 1:1:1:1 stoichiometry. Interacts with VPS37A, VPS37B and VPS37C. Interacts with DMAP1. Interacts with ubiquitin. Interacts with AATF. Interacts with stathmin and GMCL. Component of an ESCRT-I complex (endosomal sorting complex required for transport I) which consists of TSG101, VPS28, VPS37A and UBAP1 in a 1:1:1:1 stoichiometry. Interacts with HGS; the interaction mediates the association with the ESCRT-0 complex. Interacts with GGA1 and GGA3. Interacts (via UEV domain) with PDCD6IP/AIP1. Interacts with VPS28, SNF8 and VPS36. Self-associates. Interacts with MVB12A; the association appears to be mediated by the TSG101-VPS37 binary subcomplex. Interacts with VPS37D. Interacts with LRSAM1. Interacts with CEP55; the interaction is required for cytokinesis. Interacts with PDCD6. Interacts with LITAF. Interacts with MGRN1. Interacts with ARRDC1; recruits TSG101 to the plasma membrane. Post-translationally, monoubiquitinated at multiple sites by LRSAM1 and by MGRN1. Ubiquitination inactivates it, possibly by regulating its shuttling between an active membrane-bound protein and an inactive soluble form. Ubiquitination by MGRN1 requires the presence of UBE2D1.

It localises to the cytoplasm. The protein resides in the early endosome membrane. The protein localises to the late endosome membrane. It is found in the cytoskeleton. Its subcellular location is the microtubule organizing center. It localises to the centrosome. The protein resides in the midbody. The protein localises to the midbody ring. It is found in the nucleus. In terms of biological role, component of the ESCRT-I complex, a regulator of vesicular trafficking process. Binds to ubiquitinated cargo proteins and is required for the sorting of endocytic ubiquitinated cargos into multivesicular bodies (MVBs). Mediates the association between the ESCRT-0 and ESCRT-I complex. Required for completion of cytokinesis; the function requires CEP55. May be involved in cell growth and differentiation. Acts as a negative growth regulator. Required for the exosomal release of SDCBP, CD63 and syndecan. It may also play a role in the extracellular release of microvesicles that differ from the exosomes. This Rattus norvegicus (Rat) protein is Tumor susceptibility gene 101 protein (Tsg101).